A 458-amino-acid polypeptide reads, in one-letter code: UDP-N-acetylmuramate--L-alanine ligase (458 aa).

118–124 (GTHGKTT) is a binding site for ATP.

It belongs to the MurCDEF family.

It localises to the cytoplasm. The catalysed reaction is UDP-N-acetyl-alpha-D-muramate + L-alanine + ATP = UDP-N-acetyl-alpha-D-muramoyl-L-alanine + ADP + phosphate + H(+). It participates in cell wall biogenesis; peptidoglycan biosynthesis. Functionally, cell wall formation. The chain is UDP-N-acetylmuramate--L-alanine ligase from Clostridium botulinum (strain ATCC 19397 / Type A).